Here is an 87-residue protein sequence, read N- to C-terminus: Putative acyl-CoA-binding protein (87 aa).

Residues 1–86 (MSSTFEQAAA…VDELKTKYGM (86 aa)) enclose the ACB domain. An acyl-CoA contacts are provided by residues lysine 13, 28–32 (YALFK), lysine 50, lysine 54, and tyrosine 73.

This sequence belongs to the ACBP family.

The protein resides in the cytoplasm. The protein localises to the nucleus. Functionally, binds medium- and long-chain acyl-CoA esters with very high affinity and may function as an intracellular carrier of acyl-CoA esters. May enhance the activity of the ceramide synthase complex. In Schizosaccharomyces pombe (strain 972 / ATCC 24843) (Fission yeast), this protein is Putative acyl-CoA-binding protein.